A 509-amino-acid chain; its full sequence is GMP synthase [glutamine-hydrolyzing] (509 aa).

One can recognise a Glutamine amidotransferase type-1 domain in the interval 4–194 (KVIVLDFGGQ…LYEICGLTPD (191 aa)). Residue C81 is the Nucleophile of the active site. Active-site residues include H168 and E170. A GMPS ATP-PPase domain is found at 195-384 (WTMESFAQKA…LGLPESIVWR (190 aa)). An ATP-binding site is contributed by 222–228 (SGGVDSS).

As to quaternary structure, homodimer.

It carries out the reaction XMP + L-glutamine + ATP + H2O = GMP + L-glutamate + AMP + diphosphate + 2 H(+). The protein operates within purine metabolism; GMP biosynthesis; GMP from XMP (L-Gln route): step 1/1. Functionally, catalyzes the synthesis of GMP from XMP. This Carboxydothermus hydrogenoformans (strain ATCC BAA-161 / DSM 6008 / Z-2901) protein is GMP synthase [glutamine-hydrolyzing].